The following is a 284-amino-acid chain: RNase adapter protein RapZ (284 aa).

Residue 8–15 (GRSGSGKS) participates in ATP binding. 56–59 (DVRN) lines the GTP pocket. Residues 266-284 (RARGKNVQSRHRTLEKRKQ) are RNA-binding.

It belongs to the RapZ-like family. RapZ subfamily. Homotrimer.

In terms of biological role, modulates the synthesis of GlmS, by affecting the processing and stability of the regulatory small RNA GlmZ. When glucosamine-6-phosphate (GlcN6P) concentrations are high in the cell, RapZ binds GlmZ and targets it to cleavage by RNase E. Consequently, GlmZ is inactivated and unable to activate GlmS synthesis. Under low GlcN6P concentrations, RapZ is sequestered and inactivated by an other regulatory small RNA, GlmY, preventing GlmZ degradation and leading to synthesis of GlmS. In Yersinia pseudotuberculosis serotype O:1b (strain IP 31758), this protein is RNase adapter protein RapZ.